A 119-amino-acid polypeptide reads, in one-letter code: RNA guanine-N7 methyltransferase activating subunit (119 aa).

Positions 1 to 55 are interaction with RNMT; the sequence is MSDTSEEIPNFEEMFASRFTKDDKEYQEYLKRPPESPPIVEEWNSRAGGNQRNRG. The tract at residues 30–119 is disordered; the sequence is LKRPPESPPI…HNQRPPYGYY (90 aa). Ser36 is subject to Phosphoserine. Positions 36–42 match the RNMT-activating domain motif; that stretch reads SPPIVEE. Residues 47–61 show a composition bias toward polar residues; it reads AGGNQRNRGNWLQDN. Positions 56–119 are RNA-binding; the sequence is NWLQDNRQFR…HNQRPPYGYY (64 aa). Positions 62 to 73 are enriched in basic and acidic residues; that stretch reads RQFRGRDNRRGW. Residue Arg85 is modified to Omega-N-methylarginine. Phosphoserine is present on Ser86. Residues 89 to 112 are compositionally biased toward low complexity; sequence NNNYPQQRPEPYYQQQYTQYGHNQ.

This sequence belongs to the RAM family. As to quaternary structure, interacts with RNMT; this interaction enhances mRNA binding and cap methyltransferase activity.

It localises to the nucleus. In terms of biological role, regulatory subunit of the mRNA-capping methyltransferase RNMT:RAMAC complex that methylates the N7 position of the added guanosine to the 5'-cap structure of mRNAs. Promotes the recruitment of the methyl donor, S-adenosyl-L-methionine, to RNMT. Regulates RNMT expression by a post-transcriptional stabilizing mechanism. Binds RNA. The protein is RNA guanine-N7 methyltransferase activating subunit (Ramac) of Mus musculus (Mouse).